A 393-amino-acid chain; its full sequence is NAD(P)H-quinone oxidoreductase subunit H, chloroplastic (393 aa).

It belongs to the complex I 49 kDa subunit family. In terms of assembly, NDH is composed of at least 16 different subunits, 5 of which are encoded in the nucleus.

The protein localises to the plastid. It is found in the chloroplast thylakoid membrane. It catalyses the reaction a plastoquinone + NADH + (n+1) H(+)(in) = a plastoquinol + NAD(+) + n H(+)(out). The enzyme catalyses a plastoquinone + NADPH + (n+1) H(+)(in) = a plastoquinol + NADP(+) + n H(+)(out). In terms of biological role, NDH shuttles electrons from NAD(P)H:plastoquinone, via FMN and iron-sulfur (Fe-S) centers, to quinones in the photosynthetic chain and possibly in a chloroplast respiratory chain. The immediate electron acceptor for the enzyme in this species is believed to be plastoquinone. Couples the redox reaction to proton translocation, and thus conserves the redox energy in a proton gradient. This chain is NAD(P)H-quinone oxidoreductase subunit H, chloroplastic, found in Zygnema circumcarinatum (Green alga).